A 126-amino-acid chain; its full sequence is Large ribosomal subunit protein eL18 (126 aa).

The protein belongs to the eukaryotic ribosomal protein eL18 family.

This Methanosarcina acetivorans (strain ATCC 35395 / DSM 2834 / JCM 12185 / C2A) protein is Large ribosomal subunit protein eL18.